The primary structure comprises 339 residues: Glycerol-3-phosphate dehydrogenase [NAD(P)+] (339 aa).

Residues serine 15, tryptophan 16, histidine 36, and lysine 110 each coordinate NADPH. Sn-glycerol 3-phosphate contacts are provided by lysine 110, glycine 144, and serine 146. Alanine 148 is a binding site for NADPH. Residues lysine 199, aspartate 252, serine 262, arginine 263, and asparagine 264 each coordinate sn-glycerol 3-phosphate. Lysine 199 acts as the Proton acceptor in catalysis. Arginine 263 provides a ligand contact to NADPH. NADPH contacts are provided by valine 287 and glutamate 289.

It belongs to the NAD-dependent glycerol-3-phosphate dehydrogenase family.

The protein localises to the cytoplasm. It catalyses the reaction sn-glycerol 3-phosphate + NAD(+) = dihydroxyacetone phosphate + NADH + H(+). The enzyme catalyses sn-glycerol 3-phosphate + NADP(+) = dihydroxyacetone phosphate + NADPH + H(+). The protein operates within membrane lipid metabolism; glycerophospholipid metabolism. In terms of biological role, catalyzes the reduction of the glycolytic intermediate dihydroxyacetone phosphate (DHAP) to sn-glycerol 3-phosphate (G3P), the key precursor for phospholipid synthesis. This Desulfotalea psychrophila (strain LSv54 / DSM 12343) protein is Glycerol-3-phosphate dehydrogenase [NAD(P)+].